Here is a 396-residue protein sequence, read N- to C-terminus: Flavohemoprotein (396 aa).

One can recognise a Globin domain in the interval 1-136 (MLDTQTIAIV…LADVFIQRES (136 aa)). Heme b is bound at residue histidine 85. Residues tyrosine 95 and glutamate 135 each act as charge relay system in the active site. The reductase stretch occupies residues 147-396 (GGWRTLRRFR…YECFGPHKVI (250 aa)). An FAD-binding FR-type domain is found at 150–255 (RTLRRFRIIK…APPRGDFFLD (106 aa)). FAD-binding positions include tyrosine 188 and 204–207 (RQYS). 268 to 273 (GVGQTP) is an NADP(+) binding site. 389 to 392 (CFGP) is an FAD binding site.

It belongs to the globin family. Two-domain flavohemoproteins subfamily. The protein in the C-terminal section; belongs to the flavoprotein pyridine nucleotide cytochrome reductase family. The cofactor is heme b. FAD is required as a cofactor.

The enzyme catalyses 2 nitric oxide + NADPH + 2 O2 = 2 nitrate + NADP(+) + H(+). It catalyses the reaction 2 nitric oxide + NADH + 2 O2 = 2 nitrate + NAD(+) + H(+). Is involved in NO detoxification in an aerobic process, termed nitric oxide dioxygenase (NOD) reaction that utilizes O(2) and NAD(P)H to convert NO to nitrate, which protects the bacterium from various noxious nitrogen compounds. Therefore, plays a central role in the inducible response to nitrosative stress. This chain is Flavohemoprotein, found in Yersinia pestis.